Here is a 98-residue protein sequence, read N- to C-terminus: NADH-ubiquinone oxidoreductase chain 4L (98 aa).

The next 3 helical transmembrane spans lie at M1–I21, S28–I48, and A59–V79.

It belongs to the complex I subunit 4L family. In terms of assembly, core subunit of respiratory chain NADH dehydrogenase (Complex I) which is composed of 45 different subunits.

Its subcellular location is the mitochondrion inner membrane. The enzyme catalyses a ubiquinone + NADH + 5 H(+)(in) = a ubiquinol + NAD(+) + 4 H(+)(out). In terms of biological role, core subunit of the mitochondrial membrane respiratory chain NADH dehydrogenase (Complex I) which catalyzes electron transfer from NADH through the respiratory chain, using ubiquinone as an electron acceptor. Part of the enzyme membrane arm which is embedded in the lipid bilayer and involved in proton translocation. The sequence is that of NADH-ubiquinone oxidoreductase chain 4L (MT-ND4L) from Trichosurus vulpecula (Brush-tailed possum).